We begin with the raw amino-acid sequence, 255 residues long: High-affinity branched-chain amino acid transport ATP-binding protein LivG (255 aa).

One can recognise an ABC transporter domain in the interval 6–254 (LSVNGLMMRF…PDVIRAYLGE (249 aa)). 38–45 (GPNGAGKT) lines the ATP pocket.

The protein belongs to the ABC transporter superfamily.

In terms of biological role, component of the leucine-specific transport system. The protein is High-affinity branched-chain amino acid transport ATP-binding protein LivG (livG) of Escherichia coli O157:H7.